A 152-amino-acid chain; its full sequence is Deoxyuridine 5'-triphosphate nucleotidohydrolase (152 aa).

Substrate-binding positions include 72–74 (RSG), Asn-85, and 89–91 (TID).

It belongs to the dUTPase family. Requires Mg(2+) as cofactor.

It catalyses the reaction dUTP + H2O = dUMP + diphosphate + H(+). The protein operates within pyrimidine metabolism; dUMP biosynthesis; dUMP from dCTP (dUTP route): step 2/2. Functionally, this enzyme is involved in nucleotide metabolism: it produces dUMP, the immediate precursor of thymidine nucleotides and it decreases the intracellular concentration of dUTP so that uracil cannot be incorporated into DNA. This is Deoxyuridine 5'-triphosphate nucleotidohydrolase from Rhodopseudomonas palustris (strain BisB18).